The sequence spans 412 residues: Imidazolonepropionase (412 aa).

The Fe(3+) site is built by histidine 76 and histidine 78. Residues histidine 76 and histidine 78 each coordinate Zn(2+). Residues arginine 85, tyrosine 148, and histidine 181 each contribute to the 4-imidazolone-5-propanoate site. Residue tyrosine 148 participates in N-formimidoyl-L-glutamate binding. Residue histidine 242 participates in Fe(3+) binding. Position 242 (histidine 242) interacts with Zn(2+). A 4-imidazolone-5-propanoate-binding site is contributed by glutamate 245. Residue aspartate 317 coordinates Fe(3+). A Zn(2+)-binding site is contributed by aspartate 317. N-formimidoyl-L-glutamate contacts are provided by asparagine 319 and glycine 321. Residue serine 322 coordinates 4-imidazolone-5-propanoate.

Belongs to the metallo-dependent hydrolases superfamily. HutI family. Requires Zn(2+) as cofactor. The cofactor is Fe(3+).

The protein resides in the cytoplasm. It catalyses the reaction 4-imidazolone-5-propanoate + H2O = N-formimidoyl-L-glutamate. Its pathway is amino-acid degradation; L-histidine degradation into L-glutamate; N-formimidoyl-L-glutamate from L-histidine: step 3/3. Catalyzes the hydrolytic cleavage of the carbon-nitrogen bond in imidazolone-5-propanoate to yield N-formimidoyl-L-glutamate. It is the third step in the universal histidine degradation pathway. The chain is Imidazolonepropionase from Staphylococcus saprophyticus subsp. saprophyticus (strain ATCC 15305 / DSM 20229 / NCIMB 8711 / NCTC 7292 / S-41).